The primary structure comprises 50 residues: Conotoxin Cal6.19 (50 aa).

A signal peptide spans 1 to 22 (MKVTCVLVLTLMALTVCQVATA). Intrachain disulfides connect C24–C37, C30–C41, and C36–C46.

In terms of tissue distribution, expressed by the venom duct.

It localises to the secreted. Probable neurotoxin. In Californiconus californicus (California cone), this protein is Conotoxin Cal6.19.